The sequence spans 668 residues: DNA-directed RNA polymerase subunit beta' (668 aa).

The Zn(2+) site is built by Cys-71, Cys-73, Cys-91, and Cys-94. Positions 505, 507, and 509 each coordinate Mg(2+).

It belongs to the RNA polymerase beta' chain family. RpoC1 subfamily. As to quaternary structure, in plastids the minimal PEP RNA polymerase catalytic core is composed of four subunits: alpha, beta, beta', and beta''. When a (nuclear-encoded) sigma factor is associated with the core the holoenzyme is formed, which can initiate transcription. The cofactor is Mg(2+). Zn(2+) serves as cofactor.

It is found in the plastid. The protein resides in the chloroplast. The catalysed reaction is RNA(n) + a ribonucleoside 5'-triphosphate = RNA(n+1) + diphosphate. Its function is as follows. DNA-dependent RNA polymerase catalyzes the transcription of DNA into RNA using the four ribonucleoside triphosphates as substrates. This chain is DNA-directed RNA polymerase subunit beta', found in Mesostigma viride (Green alga).